Reading from the N-terminus, the 156-residue chain is MNETMICAVGNVATTPVFRDLANGPSVRFRLAVTARYWDREKNAWTDGHTNFFTVWANRQLATNASGSLAVGDPVVVQGRLKVRTDVREGQSRTSADIDAVAIGHDLARGTAAFRRTARTEASTSPPRPEPNWEVPAGGTPGEPVPEQRPDPVPVG.

Residues 1–107 form the SSB domain; sequence MNETMICAVG…IDAVAIGHDL (107 aa). Residues 114–124 are compositionally biased toward low complexity; the sequence is FRRTARTEAST. A disordered region spans residues 114-156; the sequence is FRRTARTEASTSPPRPEPNWEVPAGGTPGEPVPEQRPDPVPVG.

As to quaternary structure, homotetramer.

This chain is Single-stranded DNA-binding protein 1 (ssb1), found in Streptomyces coelicolor (strain ATCC BAA-471 / A3(2) / M145).